The sequence spans 1088 residues: Methionine S-methyltransferase (1088 aa).

This sequence belongs to the class I-like SAM-binding methyltransferase superfamily. Homotetramer.

It is found in the cytoplasm. It carries out the reaction L-methionine + S-adenosyl-L-methionine = S-methyl-L-methionine + S-adenosyl-L-homocysteine. Its function is as follows. Catalyzes the S-methylmethionine (SMM) biosynthesis from adenosyl-L-homocysteine (AdoMet) and methionine. SMM biosynthesis (by MMT1) and degradation (by HMT-1, HMT-2 and HMT-3) constitute the SMM cycle in plants, which is probably required to achieve short term control of AdoMet level. Also able to catalyze the selenium-methylmethionine (SeMM) from AdoMet and selenium-methionine (SeMet). May play a role in phoem sulfur transport; such function is however not essential. This Wollastonia biflora (Beach sunflower) protein is Methionine S-methyltransferase (MMT1).